Here is a 446-residue protein sequence, read N- to C-terminus: 5-hydroxytryptamine receptor (446 aa).

The Extracellular portion of the chain corresponds to 1 to 65; sequence MEGAEGQEEL…AALVRAAAKA (65 aa). N23, N27, N36, and N42 each carry an N-linked (GlcNAc...) asparagine glycan. The helical transmembrane segment at 66–88 threads the bilayer; that stretch reads VVLGLLILATVVGNVFVIAAILL. Residues 89–98 are Cytoplasmic-facing; it reads ERHLRSAANN. A helical membrane pass occupies residues 99 to 120; the sequence is LILSLAVADLLVACLVMPLGAV. At 121–135 the chain is on the extracellular side; sequence YEVVQRWTLGPELCD. A disulfide bond links C134 and C214. A helical transmembrane segment spans residues 136 to 157; the sequence is MWTSGDVLCCTASILHLVAIAL. The Cytoplasmic portion of the chain corresponds to 158 to 176; it reads DRYWAVTNIDYIHASTAKR. A helical transmembrane segment spans residues 177–199; that stretch reads VGMMIACVWTVSFFVCIAQLLGW. The Extracellular segment spans residues 200 to 227; the sequence is KDPDWNQRVSEDLRCVVSQDVGYQIFAT. A helical transmembrane segment spans residues 228-249; that stretch reads ASSFYVPVLIILILYWRIYQTA. Topologically, residues 250-367 are cytoplasmic; that stretch reads RKRIRRRRGA…SKRERKAAKT (118 aa). Residues 304–324 are compositionally biased toward polar residues; the sequence is TTTGFTNVSSNNTSPEKQSCA. The disordered stretch occupies residues 304 to 329; the sequence is TTTGFTNVSSNNTSPEKQSCANGLEA. The helical transmembrane segment at 368-391 threads the bilayer; that stretch reads LAIITGAFVACWLPFFVLAILVPT. Residues 392-399 lie on the Extracellular side of the membrane; it reads CDCEVSPV. The chain crosses the membrane as a helical span at residues 400-422; that stretch reads LTSLSLWLGYFNSTLNPVIYTVF. Over 423-446 the chain is Cytoplasmic; sequence SPEFRHAFQRLLCGRRVRRRRAPQ.

This sequence belongs to the G-protein coupled receptor 1 family.

Its subcellular location is the cell membrane. Its function is as follows. This is a receptor for 5-hydroxytryptamine (serotonin), a biogenic hormone that function as a neurotransmitter, a hormone, and a mitogen. In Bombyx mori (Silk moth), this protein is 5-hydroxytryptamine receptor.